Reading from the N-terminus, the 559-residue chain is CTP synthase (559 aa).

Positions 1–270 (MTKFVFVTGG…DGLICDKLRI (270 aa)) are amidoligase domain. S13 contacts CTP. UTP is bound at residue S13. ATP contacts are provided by residues 14 to 19 (SLGKGI) and D71. Mg(2+)-binding residues include D71 and E144. Residues 151–153 (DIE), 191–196 (KTKPTQ), and K227 contribute to the CTP site. UTP-binding positions include 191–196 (KTKPTQ) and K227. Residues 295 to 547 (SIAMVGKYVD…IKAALDHKAR (253 aa)) form the Glutamine amidotransferase type-1 domain. Residue G356 participates in L-glutamine binding. Catalysis depends on C383, which acts as the Nucleophile; for glutamine hydrolysis. Residues 384–387 (LGMQ), E407, and R473 each bind L-glutamine. Active-site residues include H520 and E522.

The protein belongs to the CTP synthase family. As to quaternary structure, homotetramer.

The catalysed reaction is UTP + L-glutamine + ATP + H2O = CTP + L-glutamate + ADP + phosphate + 2 H(+). The enzyme catalyses L-glutamine + H2O = L-glutamate + NH4(+). It catalyses the reaction UTP + NH4(+) + ATP = CTP + ADP + phosphate + 2 H(+). It functions in the pathway pyrimidine metabolism; CTP biosynthesis via de novo pathway; CTP from UDP: step 2/2. Allosterically activated by GTP, when glutamine is the substrate; GTP has no effect on the reaction when ammonia is the substrate. The allosteric effector GTP functions by stabilizing the protein conformation that binds the tetrahedral intermediate(s) formed during glutamine hydrolysis. Inhibited by the product CTP, via allosteric rather than competitive inhibition. Functionally, catalyzes the ATP-dependent amination of UTP to CTP with either L-glutamine or ammonia as the source of nitrogen. Regulates intracellular CTP levels through interactions with the four ribonucleotide triphosphates. The chain is CTP synthase from Variovorax paradoxus (strain S110).